The chain runs to 689 residues: Zinc finger protein 185 (689 aa).

2 disordered regions span residues 1–253 (MSIS…GRTK) and 298–534 (APDV…SCTS). Residues 35-52 (LKGDKSWITKQDESEGRT) are compositionally biased toward basic and acidic residues. Ser-66 bears the Phosphoserine mark. The segment covering 95–114 (IDSSSQPQQQFPKANGTPKS) has biased composition (polar residues). Ser-153 is subject to Phosphoserine. Residues 157–166 (DTEEEEEEEV) are compositionally biased toward acidic residues. Position 206 is a phosphoserine (Pro-206). Basic and acidic residues-rich tracts occupy residues 217-232 (KRVE…EKSQ) and 310-331 (NKDK…EEAF). A compositionally biased stretch (polar residues) spans 338 to 349 (AARSSAQLSDGN). Low complexity-rich tracts occupy residues 373–382 (SSSATSVSAV) and 434–444 (DPAVPAQQPAD). Thr-447 carries the post-translational modification Phosphothreonine. Residues 448–458 (PERQSSPSGSE) are compositionally biased toward polar residues. Ser-453 and Ser-465 each carry phosphoserine. The segment covering 504 to 524 (PTQQPADPSTPEQQNSPSGSE) has biased composition (polar residues). Positions 627–689 (GICTYCNREI…HCGKCYEKLF (63 aa)) constitute an LIM zinc-binding domain.

Expressed in placenta, pancreas and kidney. Also expressed in prostate, testis, ovary and blood.

It is found in the cytoplasm. It localises to the cytoskeleton. The protein resides in the cell junction. Its subcellular location is the focal adhesion. Its function is as follows. May be involved in the regulation of cellular proliferation and/or differentiation. The polypeptide is Zinc finger protein 185 (ZNF185) (Homo sapiens (Human)).